We begin with the raw amino-acid sequence, 119 residues long: Large ribosomal subunit protein uL18 (119 aa).

It belongs to the universal ribosomal protein uL18 family. In terms of assembly, part of the 50S ribosomal subunit; part of the 5S rRNA/L5/L18/L25 subcomplex. Contacts the 5S and 23S rRNAs.

Functionally, this is one of the proteins that bind and probably mediate the attachment of the 5S RNA into the large ribosomal subunit, where it forms part of the central protuberance. In Nitratidesulfovibrio vulgaris (strain DSM 19637 / Miyazaki F) (Desulfovibrio vulgaris), this protein is Large ribosomal subunit protein uL18.